A 149-amino-acid chain; its full sequence is 2S seed storage albumin protein (149 aa).

A signal peptide spans 1–22 (MKLFIILATATLLIAATQAKYL). 4 disulfides stabilise this stretch: Cys38–Cys98, Cys52–Cys87, Cys88–Cys133, and Cys100–Cys140. No IgE-binding regions lie at residues 41-53 (QVKM…VKCN), 68-81 (ALSR…ESEE), 84-95 (LRGCCVAMKEME), and 97-105 (ECVCEWMKM). Positions 108-117 (ENQKGRIGET) are igE-binding. The interval 121-131 (KGIRDLKELPN) is no IgE-binding. The igE-binding stretch occupies residues 132 to 141 (KCGISEMECH).

The protein belongs to the 2S seed storage albumins family. Expressed in seeds (at protein level). Expressed in seeds.

In terms of biological role, seed storage protein. In Fagopyrum tataricum (Tartarian buckwheat), this protein is 2S seed storage albumin protein.